The primary structure comprises 238 residues: uncharacterized protein (238 aa).

The protein belongs to the mimivirus L74/L77/R857 family.

This is an uncharacterized protein from Acanthamoeba polyphaga mimivirus (APMV).